A 265-amino-acid chain; its full sequence is MADS-box protein JOINTLESS (265 aa).

The MADS-box domain occupies 3 to 57; that stretch reads REKIQIKKIDNSTARQVTFSKRRRGLFKKAEELSVLCDADVALIIFSSTGKLFDY. One can recognise a K-box domain in the interval 87–177; that stretch reads QLVENSNYSR…RQQVMEISNN (91 aa). A disordered region spans residues 196-232; it reads ENGFNNNNNEDGQSSESVTNPCNSIDPPPQDDDSSDT. The span at 205–218 shows a compositional bias: polar residues; sequence EDGQSSESVTNPCN.

Widely expressed with highest levels in shoot tips and axillary buds. Also found in fully developed pedicels and flowers.

It is found in the nucleus. In terms of biological role, putative transcription factor that coordinates gene expression underlying the differentiation of the pedicel abscission zone. May also be involved in the maintenance of the inflorescence meristem state. The sequence is that of MADS-box protein JOINTLESS (J) from Solanum lycopersicum (Tomato).